Reading from the N-terminus, the 294-residue chain is Undecaprenyl-diphosphatase (294 aa).

Helical transmembrane passes span 39-59 (PGAA…ILYF), 93-113 (ATLG…GFTL), 123-143 (NLWI…VVDA), 198-218 (SFLM…VKAV), 232-252 (PTLV…IGFL), and 268-288 (IGLA…AIDP).

The protein belongs to the UppP family.

It is found in the cell membrane. The enzyme catalyses di-trans,octa-cis-undecaprenyl diphosphate + H2O = di-trans,octa-cis-undecaprenyl phosphate + phosphate + H(+). Catalyzes the dephosphorylation of undecaprenyl diphosphate (UPP). Confers resistance to bacitracin. The sequence is that of Undecaprenyl-diphosphatase from Bifidobacterium longum subsp. infantis (strain ATCC 15697 / DSM 20088 / JCM 1222 / NCTC 11817 / S12).